Here is a 132-residue protein sequence, read N- to C-terminus: Ribonuclease P protein component 4 (132 aa).

Zn(2+)-binding residues include Cys-67, Cys-70, Cys-96, and Cys-99.

This sequence belongs to the eukaryotic/archaeal RNase P protein component 4 family. Consists of a catalytic RNA component and at least 4-5 protein subunits. It depends on Zn(2+) as a cofactor.

The protein localises to the cytoplasm. The catalysed reaction is Endonucleolytic cleavage of RNA, removing 5'-extranucleotides from tRNA precursor.. In terms of biological role, part of ribonuclease P, a protein complex that generates mature tRNA molecules by cleaving their 5'-ends. This chain is Ribonuclease P protein component 4, found in Thermococcus kodakarensis (strain ATCC BAA-918 / JCM 12380 / KOD1) (Pyrococcus kodakaraensis (strain KOD1)).